The primary structure comprises 332 residues: L-lactate dehydrogenase A chain (332 aa).

Residues 29-57 and Arg-99 contribute to the NAD(+) site; that span reads GMVGMASAISILLKDLCDELALVDVMEDK. Substrate-binding residues include Arg-106, Asn-138, and Arg-169. Asn-138 provides a ligand contact to NAD(+). His-193 serves as the catalytic Proton acceptor. Thr-248 lines the substrate pocket.

This sequence belongs to the LDH/MDH superfamily. LDH family. Homotetramer.

The protein resides in the cytoplasm. It catalyses the reaction (S)-lactate + NAD(+) = pyruvate + NADH + H(+). It participates in fermentation; pyruvate fermentation to lactate; (S)-lactate from pyruvate: step 1/1. In terms of biological role, interconverts simultaneously and stereospecifically pyruvate and lactate with concomitant interconversion of NADH and NAD(+). This Rhinogobiops nicholsii (Blackeye goby) protein is L-lactate dehydrogenase A chain (ldha).